The primary structure comprises 191 residues: Ribonuclease M5 1 (191 aa).

One can recognise a Toprim domain in the interval 10–93 (KEVIVVEGKD…AFLTKHDAAP (84 aa)). Positions 16, 62, and 64 each coordinate Mg(2+).

The protein belongs to the ribonuclease M5 family. The cofactor is Mg(2+).

It is found in the cytoplasm. It carries out the reaction Endonucleolytic cleavage of RNA, removing 21 and 42 nucleotides, respectively, from the 5'- and 3'-termini of a 5S-rRNA precursor.. Functionally, required for correct processing of both the 5' and 3' ends of 5S rRNA precursor. Cleaves both sides of a double-stranded region yielding mature 5S rRNA in one step. The chain is Ribonuclease M5 1 from Ligilactobacillus salivarius (strain CECT 5713) (Lactobacillus salivarius).